The chain runs to 21 residues: Thanatin (21 aa).

The cysteines at positions 11 and 18 are disulfide-linked.

The protein resides in the secreted. In terms of biological role, insect defense peptide with a broad spectrum of activity against Gram-positive and Gram-negative bacteria and fungi. No activity against S.aureus. Stops respiration in bacteria but does not permeabilize their inner membranes. The protein is Thanatin of Podisus maculiventris (Spined soldier bug).